Reading from the N-terminus, the 436-residue chain is Phosphate-repressible acid phosphatase (436 aa).

The signal sequence occupies residues 1–20; that stretch reads MKGTAASALLIALSATAAQA. Residues asparagine 227, asparagine 283, and asparagine 304 are each glycosylated (N-linked (GlcNAc...) asparagine).

As to quaternary structure, monomer.

It catalyses the reaction a phosphate monoester + H2O = an alcohol + phosphate. This is Phosphate-repressible acid phosphatase (pacA) from Aspergillus niger.